Consider the following 642-residue polypeptide: Threonine--tRNA ligase (642 aa).

The TGS domain maps to 1–61 (MPIITLPDGS…SEDANLEIIT (61 aa)). The segment at 243–534 (DHRKIGKALD…ITEEYAGFFP (292 aa)) is catalytic. Positions 334, 385, and 511 each coordinate Zn(2+).

Belongs to the class-II aminoacyl-tRNA synthetase family. As to quaternary structure, homodimer. It depends on Zn(2+) as a cofactor.

It localises to the cytoplasm. It carries out the reaction tRNA(Thr) + L-threonine + ATP = L-threonyl-tRNA(Thr) + AMP + diphosphate + H(+). Functionally, catalyzes the attachment of threonine to tRNA(Thr) in a two-step reaction: L-threonine is first activated by ATP to form Thr-AMP and then transferred to the acceptor end of tRNA(Thr). Also edits incorrectly charged L-seryl-tRNA(Thr). The chain is Threonine--tRNA ligase from Histophilus somni (strain 129Pt) (Haemophilus somnus).